We begin with the raw amino-acid sequence, 447 residues long: Argininosuccinate synthase (447 aa).

ATP contacts are provided by residues 17-25 and Ala-43; that span reads AFSGGLDTS. Tyr-99 provides a ligand contact to L-citrulline. ATP is bound by residues Gly-129 and Thr-131. 3 residues coordinate L-aspartate: Thr-131, Asn-135, and Asp-136. Residue Asn-135 coordinates L-citrulline. Asp-136 is a binding site for ATP. The L-citrulline site is built by Arg-139 and Ser-192. Asp-194 serves as a coordination point for ATP. Positions 201, 203, and 280 each coordinate L-citrulline.

This sequence belongs to the argininosuccinate synthase family. Type 2 subfamily. As to quaternary structure, homotetramer.

It localises to the cytoplasm. The enzyme catalyses L-citrulline + L-aspartate + ATP = 2-(N(omega)-L-arginino)succinate + AMP + diphosphate + H(+). It functions in the pathway amino-acid biosynthesis; L-arginine biosynthesis; L-arginine from L-ornithine and carbamoyl phosphate: step 2/3. This is Argininosuccinate synthase from Paracidovorax citrulli (strain AAC00-1) (Acidovorax citrulli).